The primary structure comprises 545 residues: Glucose-6-phosphate isomerase (545 aa).

Glu-351 serves as the catalytic Proton donor. Residues His-382 and Lys-510 contribute to the active site.

Belongs to the GPI family.

It localises to the cytoplasm. The enzyme catalyses alpha-D-glucose 6-phosphate = beta-D-fructose 6-phosphate. Its pathway is carbohydrate biosynthesis; gluconeogenesis. It functions in the pathway carbohydrate degradation; glycolysis; D-glyceraldehyde 3-phosphate and glycerone phosphate from D-glucose: step 2/4. Functionally, catalyzes the reversible isomerization of glucose-6-phosphate to fructose-6-phosphate. The polypeptide is Glucose-6-phosphate isomerase (Helicobacter pylori (strain Shi470)).